A 387-amino-acid chain; its full sequence is Protein kinase gsk3 (387 aa).

A Protein kinase domain is found at 32-316 (YTSSKVVGSG…AAEAMCHPFF (285 aa)). ATP-binding positions include 38–46 (VGSGSFGVV) and lysine 61. Aspartate 157 acts as the Proton acceptor in catalysis. Serine 191 bears the Phosphoserine mark. At tyrosine 192 the chain carries Phosphotyrosine; by autocatalysis. Serine 335 is subject to Phosphoserine.

Belongs to the protein kinase superfamily. CMGC Ser/Thr protein kinase family. GSK-3 subfamily. In terms of processing, autophosphorylated on tyrosine residues.

Its subcellular location is the cytoplasm. It is found in the nucleus. The catalysed reaction is L-seryl-[protein] + ATP = O-phospho-L-seryl-[protein] + ADP + H(+). It catalyses the reaction L-threonyl-[protein] + ATP = O-phospho-L-threonyl-[protein] + ADP + H(+). Interacts with cdc14 which is thought to play a role in the initiation and completion of mitosis. Involved in the positive regulation of mis12. This Schizosaccharomyces pombe (strain 972 / ATCC 24843) (Fission yeast) protein is Protein kinase gsk3 (gsk3).